The primary structure comprises 116 residues: uncharacterized protein (116 aa).

The next 3 membrane-spanning stretches (helical) occupy residues 5–27 (AILLSLAGIADSSYLLLSEAVPC), 42–64 (PFVPALLGLCWFVLSIVVFTAGV), and 88–110 (VLHGYFCPYCFTAYGIGIVVVAI).

The protein resides in the cell membrane. This is an uncharacterized protein from Archaeoglobus fulgidus (strain ATCC 49558 / DSM 4304 / JCM 9628 / NBRC 100126 / VC-16).